Reading from the N-terminus, the 355-residue chain is Uroporphyrinogen decarboxylase (355 aa).

Substrate is bound by residues 36–40, Asp-85, Tyr-160, Ser-215, and His-334; that span reads RQAGR.

This sequence belongs to the uroporphyrinogen decarboxylase family. In terms of assembly, homodimer.

The protein resides in the cytoplasm. It catalyses the reaction uroporphyrinogen III + 4 H(+) = coproporphyrinogen III + 4 CO2. The protein operates within porphyrin-containing compound metabolism; protoporphyrin-IX biosynthesis; coproporphyrinogen-III from 5-aminolevulinate: step 4/4. Its function is as follows. Catalyzes the decarboxylation of four acetate groups of uroporphyrinogen-III to yield coproporphyrinogen-III. The chain is Uroporphyrinogen decarboxylase from Rhodococcus erythropolis (strain PR4 / NBRC 100887).